An 82-amino-acid chain; its full sequence is Penaeidin-3i (82 aa).

Positions 1 to 19 are cleaved as a signal peptide; it reads MRLVVCLVFLASFALVCQG. Q20 is subject to Pyrrolidone carboxylic acid. 2 disulfides stabilise this stretch: C55/C73 and C67/C74. The residue at position 81 (S81) is a Serine amide.

Belongs to the penaeidin family.

It is found in the cytoplasmic granule. Antibacterial and antifungal activity. Presents chitin-binding activity. The protein is Penaeidin-3i of Penaeus vannamei (Whiteleg shrimp).